The following is a 102-amino-acid chain: Small ribosomal subunit protein uS10 (102 aa).

This sequence belongs to the universal ribosomal protein uS10 family. As to quaternary structure, part of the 30S ribosomal subunit.

Its function is as follows. Involved in the binding of tRNA to the ribosomes. This Dehalococcoides mccartyi (strain ATCC BAA-2266 / KCTC 15142 / 195) (Dehalococcoides ethenogenes (strain 195)) protein is Small ribosomal subunit protein uS10.